The chain runs to 426 residues: UPF0597 protein CLD_2825 (426 aa).

The protein belongs to the UPF0597 family.

This Clostridium botulinum (strain Okra / Type B1) protein is UPF0597 protein CLD_2825.